The chain runs to 233 residues: Orotidine 5'-phosphate decarboxylase (233 aa).

Substrate is bound by residues Asp11, Lys34, 61 to 70 (DLKLHDIPNT), Thr117, Arg179, Gln188, Gly208, and Arg209. Residue Lys63 is the Proton donor of the active site.

Belongs to the OMP decarboxylase family. Type 1 subfamily. Homodimer.

The enzyme catalyses orotidine 5'-phosphate + H(+) = UMP + CO2. It participates in pyrimidine metabolism; UMP biosynthesis via de novo pathway; UMP from orotate: step 2/2. Its function is as follows. Catalyzes the decarboxylation of orotidine 5'-monophosphate (OMP) to uridine 5'-monophosphate (UMP). The chain is Orotidine 5'-phosphate decarboxylase from Streptococcus pneumoniae (strain Hungary19A-6).